The chain runs to 237 residues: UPF0280 protein Mthe_1297 (237 aa).

This sequence belongs to the UPF0280 family.

The sequence is that of UPF0280 protein Mthe_1297 from Methanothrix thermoacetophila (strain DSM 6194 / JCM 14653 / NBRC 101360 / PT) (Methanosaeta thermophila).